Reading from the N-terminus, the 106-residue chain is N(4)-acetylcytidine amidohydrolase (106 aa).

Positions 9–105 constitute an ASCH domain; sequence TFFEFLTPLI…ELYVIEYELI (97 aa). The active-site Proton acceptor is Lys-23. The Nucleophile role is filled by Thr-26. Glu-76 (proton donor) is an active-site residue.

It belongs to the N(4)-acetylcytidine amidohydrolase family.

It catalyses the reaction N(4)-acetylcytidine + H2O = cytidine + acetate + H(+). The catalysed reaction is N(4)-acetyl-2'-deoxycytidine + H2O = 2'-deoxycytidine + acetate + H(+). It carries out the reaction N(4)-acetylcytosine + H2O = cytosine + acetate + H(+). Catalyzes the hydrolysis of N(4)-acetylcytidine (ac4C). The chain is N(4)-acetylcytidine amidohydrolase from Vibrio campbellii (strain ATCC BAA-1116).